Consider the following 426-residue polypeptide: Isocitrate dehydrogenase [NADP] (426 aa).

Residues Ser-123, Asn-125, Arg-129, Arg-139, and Arg-162 each contribute to the D-threo-isocitrate site. Mg(2+) is bound at residue Asp-312. Residues 344–350 (HGTAWDI), Asn-357, and Lys-404 contribute to the NADP(+) site.

This sequence belongs to the isocitrate and isopropylmalate dehydrogenases family. In terms of assembly, homodimer. It depends on Mg(2+) as a cofactor. The cofactor is Mn(2+).

It carries out the reaction D-threo-isocitrate + NADP(+) = 2-oxoglutarate + CO2 + NADPH. In terms of biological role, catalyzes the oxidative decarboxylation of isocitrate to 2-oxoglutarate and carbon dioxide with the concomitant reduction of NADP(+). The sequence is that of Isocitrate dehydrogenase [NADP] (icd) from Aquifex aeolicus (strain VF5).